Here is a 311-residue protein sequence, read N- to C-terminus: Cytosolic Fe-S cluster assembly factor Nubp1 homolog (311 aa).

C9, C23, C26, and C32 together coordinate [4Fe-4S] cluster. Residue 63–70 (GKGGVGKS) participates in ATP binding. [4Fe-4S] cluster contacts are provided by C241 and C244.

This sequence belongs to the Mrp/NBP35 ATP-binding proteins family. NUBP1/NBP35 subfamily. Heterotetramer of 2 Nubp1 and 2 Nubp2 chains. Requires [4Fe-4S] cluster as cofactor.

Its subcellular location is the cytoplasm. Functionally, component of the cytosolic iron-sulfur (Fe/S) protein assembly (CIA) machinery. Required for maturation of extramitochondrial Fe-S proteins. The Nubp1-Nubp2 heterotetramer forms a Fe-S scaffold complex, mediating the de novo assembly of an Fe-S cluster and its transfer to target apoproteins. This chain is Cytosolic Fe-S cluster assembly factor Nubp1 homolog, found in Drosophila grimshawi (Hawaiian fruit fly).